A 367-amino-acid polypeptide reads, in one-letter code: Heat-inducible transcription repressor HrcA (367 aa).

The protein belongs to the HrcA family.

Negative regulator of class I heat shock genes (grpE-dnaK-dnaJ and groELS operons). Prevents heat-shock induction of these operons. The chain is Heat-inducible transcription repressor HrcA from Acaryochloris marina (strain MBIC 11017).